A 134-amino-acid chain; its full sequence is Complexin-2 (134 aa).

Positions 1-114 (MDFVMKQALG…CGDEDEEDEE (114 aa)) are disordered. The segment covering 15–85 (DMGKMLGGDE…EEKEAEEKAA (71 aa)) has biased composition (basic and acidic residues). The stretch at 29–84 (DAQKKEEERQEALRQQEDERKQKHIRMETEREKVRQQIRDKYGLKKKEEKEAEEKA) forms a coiled coil.

It belongs to the complexin/synaphin family. In terms of assembly, binds to the SNARE core complex containing SNAP25, VAMP2 and STX1A. As to expression, nervous system. Present in electric organ (at protein level).

Its subcellular location is the cytoplasm. It is found in the cytosol. It localises to the presynapse. The protein localises to the nucleus. The protein resides in the perikaryon. In terms of biological role, positively regulates a late step in synaptic vesicle exocytosis. In Narke japonica (Japanese sleeper ray), this protein is Complexin-2.